The primary structure comprises 242 residues: UPF0173 metal-dependent hydrolase Rxyl_1261 (242 aa).

The protein belongs to the UPF0173 family.

The protein is UPF0173 metal-dependent hydrolase Rxyl_1261 of Rubrobacter xylanophilus (strain DSM 9941 / JCM 11954 / NBRC 16129 / PRD-1).